A 274-amino-acid polypeptide reads, in one-letter code: Dermonecrotic toxin SdSicTox-betaIIB1bviii (274 aa).

His5 is an active-site residue. Mg(2+) contacts are provided by Glu25 and Asp27. Residue His41 is the Nucleophile of the active site. Intrachain disulfides connect Cys45–Cys51 and Cys47–Cys190. Asp85 is a Mg(2+) binding site.

It belongs to the arthropod phospholipase D family. Class II subfamily. Mg(2+) serves as cofactor. Expressed by the venom gland.

The protein resides in the secreted. It carries out the reaction an N-(acyl)-sphingosylphosphocholine = an N-(acyl)-sphingosyl-1,3-cyclic phosphate + choline. The enzyme catalyses an N-(acyl)-sphingosylphosphoethanolamine = an N-(acyl)-sphingosyl-1,3-cyclic phosphate + ethanolamine. It catalyses the reaction a 1-acyl-sn-glycero-3-phosphocholine = a 1-acyl-sn-glycero-2,3-cyclic phosphate + choline. The catalysed reaction is a 1-acyl-sn-glycero-3-phosphoethanolamine = a 1-acyl-sn-glycero-2,3-cyclic phosphate + ethanolamine. In terms of biological role, dermonecrotic toxins cleave the phosphodiester linkage between the phosphate and headgroup of certain phospholipids (sphingolipid and lysolipid substrates), forming an alcohol (often choline) and a cyclic phosphate. This toxin acts on sphingomyelin (SM). It may also act on ceramide phosphoethanolamine (CPE), lysophosphatidylcholine (LPC) and lysophosphatidylethanolamine (LPE), but not on lysophosphatidylserine (LPS), and lysophosphatidylglycerol (LPG). It acts by transphosphatidylation, releasing exclusively cyclic phosphate products as second products. Induces dermonecrosis, hemolysis, increased vascular permeability, edema, inflammatory response, and platelet aggregation. This Sicarius cf. damarensis (strain GJB-2008) (Six-eyed sand spider) protein is Dermonecrotic toxin SdSicTox-betaIIB1bviii.